A 744-amino-acid chain; its full sequence is 4'-phospho-dehydrooxetanocin synthase (744 aa).

The 141-residue stretch at 119–259 folds into the B12-binding domain; sequence TVTLVNLCVI…KMLKKELKLD (141 aa). Cob(II)alamin-binding residues include arginine 135, serine 139, serine 184, glycine 241, glutamate 242, and glutamate 308. Residues 299-545 form the Radical SAM core domain; the sequence is SKFRGALTLE…IVSYMLASME (247 aa). Residues cysteine 313, cysteine 318, and cysteine 321 each coordinate [4Fe-4S] cluster. 5 residues coordinate cob(II)alamin: proline 322, histidine 325, lysine 326, alanine 361, and glutamate 363. S-adenosyl-L-methionine is bound by residues glutamate 436 and glutamate 545.

Belongs to the radical SAM superfamily. [4Fe-4S] cluster is required as a cofactor. Cob(II)alamin serves as cofactor.

It carries out the reaction dAMP + S-adenosyl-L-methionine = 4'-phospho-dehydrooxetanocin + 5'-deoxyadenosine + L-methionine + H(+). The enzyme catalyses AH2 + 2 S-adenosyl-L-methionine = 2 5'-deoxyadenosin-5'-yl radical + 2 L-methionine + A + 2 H(+). The catalysed reaction is 2 5'-deoxyadenosin-5'-yl radical + 2 dAMP + A = 2 4'-phospho-dehydrooxetanocin + 2 5'-deoxyadenosine + AH2. Requires OxsA for the oxidative ring contraction activity. Activation of OxsB requires its direct interaction with OxsA and is independent of OxsA phosphohydrolase activity. In contrast to ring contraction, methylation does not require the presence of OxsA. Its function is as follows. Isomerase involved in the biosynthesis of oxetanocin A (OXT-A), a nucleoside analog with antitumor, antiviral and antibacterial properties. Catalyzes an oxidative ring contraction of dAMP, forming an oxetane aldehyde. In addition, shows methyltransferase activity in vitro and is able to catalyze the radical mediated, stereoselective C2'-methylation of dAMP to form methylated 2'-dAMP. Also catalyzes the demethylation of S-adenosyl-L-methionine (SAM) to S-adenosyl-L-homocysteine (SAH). This is 4'-phospho-dehydrooxetanocin synthase from Priestia megaterium (Bacillus megaterium).